Reading from the N-terminus, the 338-residue chain is tRNA N6-adenosine threonylcarbamoyltransferase (338 aa).

The Fe cation site is built by His111 and His115. Substrate-binding positions include 134 to 138 (LLSGG), Asp167, Gly180, and Asn275. Position 304 (Asp304) interacts with Fe cation.

Belongs to the KAE1 / TsaD family. The cofactor is Fe(2+).

It localises to the cytoplasm. It carries out the reaction L-threonylcarbamoyladenylate + adenosine(37) in tRNA = N(6)-L-threonylcarbamoyladenosine(37) in tRNA + AMP + H(+). Functionally, required for the formation of a threonylcarbamoyl group on adenosine at position 37 (t(6)A37) in tRNAs that read codons beginning with adenine. Is involved in the transfer of the threonylcarbamoyl moiety of threonylcarbamoyl-AMP (TC-AMP) to the N6 group of A37, together with TsaE and TsaB. TsaD likely plays a direct catalytic role in this reaction. The sequence is that of tRNA N6-adenosine threonylcarbamoyltransferase from Leptospira interrogans serogroup Icterohaemorrhagiae serovar copenhageni (strain Fiocruz L1-130).